We begin with the raw amino-acid sequence, 451 residues long: Cytochrome c biogenesis protein CcsB (451 aa).

3 helical membrane passes run 30-50 (LRLAIVLLLAIALFSISGTVI), 89-109 (TWWFLSLLVLFGTSLTTCTFT), and 175-195 (IGPIVVHAAMLIILGGAIWGA).

This sequence belongs to the Ccs1/CcsB family. In terms of assembly, may interact with CcsA.

It is found in the cellular thylakoid membrane. Functionally, required during biogenesis of c-type cytochromes (cytochrome c6 and cytochrome f) at the step of heme attachment. The polypeptide is Cytochrome c biogenesis protein CcsB (Crocosphaera subtropica (strain ATCC 51142 / BH68) (Cyanothece sp. (strain ATCC 51142))).